Reading from the N-terminus, the 362-residue chain is Molybdopterin synthase catalytic subunit (362 aa).

Residues histidine 101–arginine 102, lysine 117, and lysine 124–glutamate 126 contribute to the substrate site.

It belongs to the MoaE family. MOCS2B subfamily. As to quaternary structure, heterotetramer; composed of 2 small (Mocs2A) and 2 large (Mocs2B) subunits.

It is found in the cytoplasm. The catalysed reaction is 2 [molybdopterin-synthase sulfur-carrier protein]-C-terminal-Gly-aminoethanethioate + cyclic pyranopterin phosphate + H2O = molybdopterin + 2 [molybdopterin-synthase sulfur-carrier protein]-C-terminal Gly-Gly + 2 H(+). It functions in the pathway cofactor biosynthesis; molybdopterin biosynthesis. Functionally, catalytic subunit of the molybdopterin synthase complex, a complex that catalyzes the conversion of precursor Z into molybdopterin. Acts by mediating the incorporation of 2 sulfur atoms from thiocarboxylated Mocs2A into precursor Z to generate a dithiolene group. The sequence is that of Molybdopterin synthase catalytic subunit from Drosophila grimshawi (Hawaiian fruit fly).